A 114-amino-acid polypeptide reads, in one-letter code: Nucleoid-associated protein PCC8801_2554 (114 aa).

This sequence belongs to the YbaB/EbfC family. Homodimer.

It localises to the cytoplasm. The protein resides in the nucleoid. In terms of biological role, binds to DNA and alters its conformation. May be involved in regulation of gene expression, nucleoid organization and DNA protection. The polypeptide is Nucleoid-associated protein PCC8801_2554 (Rippkaea orientalis (strain PCC 8801 / RF-1) (Cyanothece sp. (strain PCC 8801))).